Consider the following 939-residue polypeptide: Nonsense-mediated mRNA decay factor SMG8 (939 aa).

Disordered regions lie at residues 561–600 (KICTPQGEDENEDGETEEADEDTEEKEQAEGDNCSQQLSP) and 617–645 (LNESQESSEQLSGSEHESPNSGTSSADTE). The span at 567–587 (GEDENEDGETEEADEDTEEKE) shows a compositional bias: acidic residues. Residues 617-629 (LNESQESSEQLSG) are compositionally biased toward low complexity.

The protein belongs to the SMG8 family.

Its function is as follows. Involved in nonsense-mediated decay (NMD) of mRNAs containing premature stop codons. Probable component of kinase complex containing nonC and recruited to stalled ribosomes. This chain is Nonsense-mediated mRNA decay factor SMG8, found in Drosophila ananassae (Fruit fly).